The primary structure comprises 320 residues: UDP-3-O-acyl-N-acetylglucosamine deacetylase (320 aa).

Zn(2+)-binding residues include H92, H251, and D255. H278 acts as the Proton donor in catalysis.

The protein belongs to the LpxC family. Requires Zn(2+) as cofactor.

The catalysed reaction is a UDP-3-O-[(3R)-3-hydroxyacyl]-N-acetyl-alpha-D-glucosamine + H2O = a UDP-3-O-[(3R)-3-hydroxyacyl]-alpha-D-glucosamine + acetate. It functions in the pathway glycolipid biosynthesis; lipid IV(A) biosynthesis; lipid IV(A) from (3R)-3-hydroxytetradecanoyl-[acyl-carrier-protein] and UDP-N-acetyl-alpha-D-glucosamine: step 2/6. In terms of biological role, catalyzes the hydrolysis of UDP-3-O-myristoyl-N-acetylglucosamine to form UDP-3-O-myristoylglucosamine and acetate, the committed step in lipid A biosynthesis. This Psychrobacter arcticus (strain DSM 17307 / VKM B-2377 / 273-4) protein is UDP-3-O-acyl-N-acetylglucosamine deacetylase.